The following is an 88-amino-acid chain: Small ribosomal subunit protein uS15 (88 aa).

It belongs to the universal ribosomal protein uS15 family. In terms of assembly, part of the 30S ribosomal subunit. Forms a bridge to the 50S subunit in the 70S ribosome, contacting the 23S rRNA.

One of the primary rRNA binding proteins, it binds directly to 16S rRNA where it helps nucleate assembly of the platform of the 30S subunit by binding and bridging several RNA helices of the 16S rRNA. Its function is as follows. Forms an intersubunit bridge (bridge B4) with the 23S rRNA of the 50S subunit in the ribosome. The chain is Small ribosomal subunit protein uS15 from Mycoplasmopsis agalactiae (strain NCTC 10123 / CIP 59.7 / PG2) (Mycoplasma agalactiae).